The following is a 101-amino-acid chain: Small ribosomal subunit protein uS14 (101 aa).

This sequence belongs to the universal ribosomal protein uS14 family. In terms of assembly, part of the 30S ribosomal subunit. Contacts proteins S3 and S10.

Its function is as follows. Binds 16S rRNA, required for the assembly of 30S particles and may also be responsible for determining the conformation of the 16S rRNA at the A site. The chain is Small ribosomal subunit protein uS14 from Methylorubrum extorquens (strain PA1) (Methylobacterium extorquens).